The sequence spans 552 residues: Polypeptide N-acetylgalactosaminyltransferase 14 (552 aa).

The Cytoplasmic portion of the chain corresponds to 1-6; that stretch reads MRRLTR. A helical; Signal-anchor for type II membrane protein membrane pass occupies residues 7 to 26; that stretch reads RLVLPVFGVLWITVLLFFWV. Residues 27-552 lie on the Lumenal side of the membrane; sequence TKRKLEVPTG…MSQHWDMVSS (526 aa). 5 cysteine pairs are disulfide-bonded: Cys101-Cys328, Cys319-Cys397, Cys430-Cys449, Cys476-Cys493, and Cys517-Cys538. A catalytic subdomain A region spans residues 110–215; that stretch reads LPPTSIIITF…RDWLQPLLHR (106 aa). The substrate site is built by Asp151 and Arg176. Asp199 is a Mn(2+) binding site. Substrate is bound at residue Ser200. His201 provides a ligand contact to Mn(2+). A catalytic subdomain B region spans residues 274–336; sequence PIRTPIIAGG…PCSRVGHVFR (63 aa). A substrate-binding site is contributed by Trp305. His333 provides a ligand contact to Mn(2+). Substrate-binding residues include Arg336, His339, and Tyr341. The region spanning 415-550 is the Ricin B-type lectin domain; the sequence is KESSIQKGNI…SLMSQHWDMV (136 aa).

This sequence belongs to the glycosyltransferase 2 family. GalNAc-T subfamily. Requires Mn(2+) as cofactor. As to expression, detected in renal tubules (at protein level). Highly expressed in fetal and adult kidney. Widely expressed at low level. Weakly expressed in whole brain, cerebellum, thymus, lung, mammary gland, liver, stomach, small intestine, colon, pancreas, spleen, bladder, uterus, placenta, testis, ovary, skeletal muscle, leukocyte, B-cell, bone marrow, fetal brain, fetal thymus, fetal lung, fetal liver, fetal small intestine, fetal spleen, fetal skeletal and fetus. Detected in renal tubules (at protein level).

It is found in the golgi apparatus membrane. It carries out the reaction L-seryl-[protein] + UDP-N-acetyl-alpha-D-galactosamine = a 3-O-[N-acetyl-alpha-D-galactosaminyl]-L-seryl-[protein] + UDP + H(+). It catalyses the reaction L-threonyl-[protein] + UDP-N-acetyl-alpha-D-galactosamine = a 3-O-[N-acetyl-alpha-D-galactosaminyl]-L-threonyl-[protein] + UDP + H(+). The protein operates within protein modification; protein glycosylation. Catalyzes the initial reaction in O-linked oligosaccharide biosynthesis, the transfer of an N-acetyl-D-galactosamine residue to a serine or threonine residue on the protein receptor. Displays activity toward mucin-derived peptide substrates such as Muc2, Muc5AC, Muc7, and Muc13 (-58). May be involved in O-glycosylation in kidney. The protein is Polypeptide N-acetylgalactosaminyltransferase 14 (GALNT14) of Homo sapiens (Human).